A 467-amino-acid chain; its full sequence is Glutamine synthetase (467 aa).

Residues 11-95 enclose the GS beta-grasp domain; the sequence is HDVKWIDLRF…IVCDIIEPST (85 aa). The 365-residue stretch at 103-467 folds into the GS catalytic domain; sequence PRAIARRAEE…PLEYDLYYSV (365 aa). Mg(2+) contacts are provided by E128 and E130. E206 lines the ATP pocket. Positions 211 and 219 each coordinate Mg(2+). L-glutamate is bound by residues 263-264 and G264; that span reads NG. H268 contributes to the Mg(2+) binding site. ATP is bound by residues 270-272 and S272; that span reads HMS. L-glutamate-binding residues include R320, E326, and R338. The ATP site is built by R338, R343, and K351. E356 contacts Mg(2+). R358 lines the L-glutamate pocket. Position 396 is an O-AMP-tyrosine (Y396).

It belongs to the glutamine synthetase family. As to quaternary structure, oligomer of 12 subunits arranged in the form of two hexameric ring. Mg(2+) is required as a cofactor.

The protein resides in the cytoplasm. The catalysed reaction is L-glutamate + NH4(+) + ATP = L-glutamine + ADP + phosphate + H(+). Its activity is regulated as follows. The activity of this enzyme could be controlled by adenylation under conditions of abundant glutamine. In terms of biological role, catalyzes the ATP-dependent biosynthesis of glutamine from glutamate and ammonia. The polypeptide is Glutamine synthetase (Azotobacter vinelandii).